The primary structure comprises 109 residues: Hainantoxin-XVIII.2 (109 aa).

A signal peptide spans 1-18 (MKLSIIIIVTSLVIAVVA). The propeptide occupies 19–46 (FPSKDSKAIENDKTEQRMEIVVQETARA). 4 disulfides stabilise this stretch: Cys47-Cys62, Cys55-Cys68, Cys59-Cys108, and Cys61-Cys81.

It belongs to the neurotoxin 25 family. F7 subfamily. Expressed by the venom gland.

Its subcellular location is the secreted. In terms of biological role, putative ion channel inhibitor. The sequence is that of Hainantoxin-XVIII.2 from Cyriopagopus hainanus (Chinese bird spider).